A 272-amino-acid polypeptide reads, in one-letter code: Indole-3-glycerol phosphate synthase (272 aa).

The protein belongs to the TrpC family.

It carries out the reaction 1-(2-carboxyphenylamino)-1-deoxy-D-ribulose 5-phosphate + H(+) = (1S,2R)-1-C-(indol-3-yl)glycerol 3-phosphate + CO2 + H2O. The protein operates within amino-acid biosynthesis; L-tryptophan biosynthesis; L-tryptophan from chorismate: step 4/5. The sequence is that of Indole-3-glycerol phosphate synthase from Mycobacterium sp. (strain JLS).